The primary structure comprises 443 residues: C4-dicarboxylate transport protein (443 aa).

Helical transmembrane passes span 17 to 37 (PFYS…ILLG), 57 to 77 (LVKM…IAGM), 92 to 112 (LYFL…ANVV), 139 to 159 (EQSI…GAFA), 161 to 181 (GDIL…AMVG), 201 to 221 (LVAI…AFTI), 234 to 254 (MLIG…LGAV), 320 to 340 (IYMT…LSWG), and 368 to 388 (AATL…ILGI).

Belongs to the dicarboxylate/amino acid:cation symporter (DAACS) (TC 2.A.23) family.

Its subcellular location is the cell inner membrane. Its function is as follows. Responsible for the transport of dicarboxylates such as succinate, fumarate, and malate from the periplasm across the membrane. The chain is C4-dicarboxylate transport protein from Rhizobium leguminosarum bv. trifolii (strain WSM2304).